Here is a 214-residue protein sequence, read N- to C-terminus: Ras-related protein RABA2b (214 aa).

19–26 (GDSGVGKS) contacts GTP. Positions 41 to 49 (SKSTIGVEF) match the Effector region motif. Residues 67–71 (DTAGQ), 125–128 (NKSD), and 155–156 (SA) contribute to the GTP site. Residues Cys-211 and Cys-212 are each lipidated (S-geranylgeranyl cysteine).

This sequence belongs to the small GTPase superfamily. Rab family. As to expression, expressed in root tips.

The protein resides in the endosome membrane. The protein localises to the golgi apparatus. Its subcellular location is the trans-Golgi network membrane. In terms of biological role, intracellular vesicle trafficking and protein transport. In Arabidopsis thaliana (Mouse-ear cress), this protein is Ras-related protein RABA2b (RABA2B).